A 78-amino-acid polypeptide reads, in one-letter code: Mandibular organ-inhibiting hormone 2 (78 aa).

3 disulfide bridges follow: cysteine 7–cysteine 44, cysteine 24–cysteine 40, and cysteine 27–cysteine 53.

Belongs to the arthropod CHH/MIH/GIH/VIH hormone family. As to expression, produced by the medulla terminalis X-organ in the eyestalks and transported to the sinus gland where it is stored and released.

The protein localises to the secreted. Its function is as follows. Represses the synthesis of methyl farnesoate, the precursor of insect juvenile hormone III in the mandibular organ. In Cancer pagurus (Rock crab), this protein is Mandibular organ-inhibiting hormone 2.